Here is a 472-residue protein sequence, read N- to C-terminus: Protein translocase subunit SecD (472 aa).

The next 6 membrane-spanning stretches (helical) occupy residues 7 to 27, 298 to 318, 326 to 345, 349 to 368, 392 to 414, and 432 to 452; these read LLLL…KLPL, LVAG…YYRL, SLMI…GVTL, GIAG…VLIF, AFSS…FWFG, and SLFT…LSLP.

The protein belongs to the SecD/SecF family. SecD subfamily. Forms a complex with SecF. Part of the essential Sec protein translocation apparatus which comprises SecA, SecYEG and auxiliary proteins SecDF. Other proteins may also be involved.

The protein localises to the cell inner membrane. In terms of biological role, part of the Sec protein translocase complex. Interacts with the SecYEG preprotein conducting channel. SecDF uses the proton motive force (PMF) to complete protein translocation after the ATP-dependent function of SecA. Probably participates in protein translocation into and across both the cytoplasmic and thylakoid membranes in cyanobacterial cells. This Synechocystis sp. (strain ATCC 27184 / PCC 6803 / Kazusa) protein is Protein translocase subunit SecD.